The following is a 401-amino-acid chain: Argininosuccinate synthase (401 aa).

9–17 (AYSGGLDTS) contributes to the ATP binding site. Position 86 (Tyr86) interacts with L-citrulline. Gly116 provides a ligand contact to ATP. Residues Thr118, Asn122, and Asp123 each contribute to the L-aspartate site. Position 122 (Asn122) interacts with L-citrulline. L-citrulline is bound by residues Arg126, Ser174, Ser183, Glu259, and Tyr271.

It belongs to the argininosuccinate synthase family. Type 1 subfamily. Homotetramer.

It localises to the cytoplasm. It catalyses the reaction L-citrulline + L-aspartate + ATP = 2-(N(omega)-L-arginino)succinate + AMP + diphosphate + H(+). It participates in amino-acid biosynthesis; L-arginine biosynthesis; L-arginine from L-ornithine and carbamoyl phosphate: step 2/3. The polypeptide is Argininosuccinate synthase (Bacillus cytotoxicus (strain DSM 22905 / CIP 110041 / 391-98 / NVH 391-98)).